The primary structure comprises 453 residues: Na(+)/H(+) antiporter NhaA 2 (453 aa).

Transmembrane regions (helical) follow at residues Phe-23–Ile-43, Leu-74–Ile-94, Leu-111–Gly-131, Gly-139–Gly-159, Val-168–Phe-188, Gly-191–Leu-211, Ile-214–Leu-234, Leu-235–Ala-255, Val-316–Val-336, Trp-345–Val-365, Ile-386–Leu-406, and Leu-419–Ser-439.

This sequence belongs to the NhaA Na(+)/H(+) (TC 2.A.33) antiporter family.

It localises to the cell inner membrane. It carries out the reaction Na(+)(in) + 2 H(+)(out) = Na(+)(out) + 2 H(+)(in). Na(+)/H(+) antiporter that extrudes sodium in exchange for external protons. The chain is Na(+)/H(+) antiporter NhaA 2 from Pseudomonas putida (strain ATCC 47054 / DSM 6125 / CFBP 8728 / NCIMB 11950 / KT2440).